Consider the following 374-residue polypeptide: Dihydrolipoyllysine-residue acetyltransferase component of acetoin cleaving system (374 aa).

A Lipoyl-binding domain is found at 9 to 84 (IIPIVMPKWG…PVKALLGVLA (76 aa)). N6-lipoyllysine is present on Lys50. In terms of domain architecture, AB hydrolase-1 spans 137 to 360 (TVLFIHGFGG…DAGHMSQMEK (224 aa)).

(R)-lipoate is required as a cofactor.

The catalysed reaction is N(6)-[(R)-dihydrolipoyl]-L-lysyl-[protein] + acetyl-CoA = N(6)-[(R)-S(8)-acetyldihydrolipoyl]-L-lysyl-[protein] + CoA. It functions in the pathway ketone degradation; acetoin degradation. Dihydrolipoamide acetyltransferase involved in acetoin catabolism. The protein is Dihydrolipoyllysine-residue acetyltransferase component of acetoin cleaving system (acoC) of Cupriavidus necator (strain ATCC 17699 / DSM 428 / KCTC 22496 / NCIMB 10442 / H16 / Stanier 337) (Ralstonia eutropha).